We begin with the raw amino-acid sequence, 84 residues long: Polcalcin Nic t 1 (84 aa).

EF-hand domains follow at residues 6-40 and 41-76; these read QDIADRERIFKRFDLNGDGKISSAELGETLKMLGS and VTSEEVQHMMAELDTDGDGFISYEEFEEFARANRGL. Ca(2+) is bound by residues D19, N21, D23, K25, E30, D54, D56, D58, and E65.

The chain is Polcalcin Nic t 1 (Nict1) from Nicotiana tabacum (Common tobacco).